The primary structure comprises 460 residues: Cysteine--tRNA ligase (460 aa).

Cys28 is a binding site for Zn(2+). The 'HIGH' region motif lies at 30-40 (MTVYDYCHLGH). Cys209, His234, and Glu238 together coordinate Zn(2+). The 'KMSKS' region motif lies at 266–270 (KMSKS). An ATP-binding site is contributed by Lys269.

Belongs to the class-I aminoacyl-tRNA synthetase family. In terms of assembly, monomer. Requires Zn(2+) as cofactor.

The protein resides in the cytoplasm. The enzyme catalyses tRNA(Cys) + L-cysteine + ATP = L-cysteinyl-tRNA(Cys) + AMP + diphosphate. The chain is Cysteine--tRNA ligase from Pseudomonas fluorescens (strain Pf0-1).